Consider the following 115-residue polypeptide: Tyrosine-protein phosphatase 19 (115 aa).

The 115-residue stretch at 1-115 (WLMIVEQKCR…ETGSDAPMVV (115 aa)) folds into the Tyrosine-protein phosphatase domain. Residue Asp-83 coordinates substrate.

It belongs to the protein-tyrosine phosphatase family.

The catalysed reaction is O-phospho-L-tyrosyl-[protein] + H2O = L-tyrosyl-[protein] + phosphate. This chain is Tyrosine-protein phosphatase 19 (STY-19), found in Styela plicata (Wrinkled sea squirt).